The primary structure comprises 271 residues: Enolase-phosphatase E1 (271 aa).

2 residues coordinate Mg(2+): aspartate 18 and glutamate 20. Substrate-binding positions include 144 to 145 (SS) and lysine 194. Residue aspartate 221 coordinates Mg(2+).

It belongs to the HAD-like hydrolase superfamily. MasA/MtnC family. As to quaternary structure, monomer. Mg(2+) serves as cofactor.

The protein resides in the cytoplasm. It localises to the nucleus. The enzyme catalyses 5-methylsulfanyl-2,3-dioxopentyl phosphate + H2O = 1,2-dihydroxy-5-(methylsulfanyl)pent-1-en-3-one + phosphate. The protein operates within amino-acid biosynthesis; L-methionine biosynthesis via salvage pathway; L-methionine from S-methyl-5-thio-alpha-D-ribose 1-phosphate: step 3/6. Its pathway is amino-acid biosynthesis; L-methionine biosynthesis via salvage pathway; L-methionine from S-methyl-5-thio-alpha-D-ribose 1-phosphate: step 4/6. In terms of biological role, bifunctional enzyme that catalyzes the enolization of 2,3-diketo-5-methylthiopentyl-1-phosphate (DK-MTP-1-P) into the intermediate 2-hydroxy-3-keto-5-methylthiopentenyl-1-phosphate (HK-MTPenyl-1-P), which is then dephosphorylated to form the acireductone 1,2-dihydroxy-3-keto-5-methylthiopentene (DHK-MTPene). The chain is Enolase-phosphatase E1 from Candida albicans (strain WO-1) (Yeast).